The sequence spans 152 residues: Endoribonuclease YbeY (152 aa).

The Zn(2+) site is built by histidine 116, histidine 120, and histidine 126.

Belongs to the endoribonuclease YbeY family. Zn(2+) serves as cofactor.

It localises to the cytoplasm. Functionally, single strand-specific metallo-endoribonuclease involved in late-stage 70S ribosome quality control and in maturation of the 3' terminus of the 16S rRNA. This is Endoribonuclease YbeY from Mycoplasma mobile (strain ATCC 43663 / 163K / NCTC 11711) (Mesomycoplasma mobile).